A 1040-amino-acid polypeptide reads, in one-letter code: FHF complex subunit HOOK-interacting protein 1A (1040 aa).

3 disordered regions span residues 555-613, 653-746, and 769-808; these read PQQL…PIDP, SEDM…AAHP, and LMEQ…EDEE. Residues 653-664 show a composition bias toward basic and acidic residues; sequence SEDMKDSQEEAA. Polar residues predominate over residues 677–690; it reads VPINNGPLLSTQPE. Basic and acidic residues-rich tracts occupy residues 696-719 and 783-804; these read EWNR…REPE and TKEE…KKEL.

The protein belongs to the FHIP family. As to quaternary structure, may be a component of the FTS/Hook/FHIP complex (FHF complex), composed of AKTIP/FTS, FHIP1B, and one or more members of the Hook family of proteins HOOK1, HOOK2, and HOOK3. May interact directly with AKTIP/FTS.

In terms of biological role, probable component of the FTS/Hook/FHIP complex (FHF complex). FHF complex promotes the distribution of AP-4 complex to the perinuclear area of the cell. In Homo sapiens (Human), this protein is FHF complex subunit HOOK-interacting protein 1A.